The chain runs to 112 residues: UPF0060 membrane protein XOO1694 (112 aa).

4 helical membrane-spanning segments follow: residues 8–28 (LLLFAATALAELVGCYLPYLW), 32–52 (GGSVWLLLPTALRLASFVWLL), 62–82 (VYAAYGGVYIASALGLWLWWV), and 92–112 (LLGAVCCLFGMAIIMFAPRSA).

Belongs to the UPF0060 family.

The protein resides in the cell inner membrane. The protein is UPF0060 membrane protein XOO1694 of Xanthomonas oryzae pv. oryzae (strain MAFF 311018).